The following is an 81-amino-acid chain: HssA/B-like protein 5 (81 aa).

This sequence belongs to the hssA/B family.

This chain is HssA/B-like protein 5 (hssl5), found in Dictyostelium discoideum (Social amoeba).